The primary structure comprises 450 residues: Probable ECA polymerase (450 aa).

11 helical membrane-spanning segments follow: residues 6 to 26 (FSGL…LTWF), 37 to 57 (VFFS…TSVL), 63 to 83 (VGVA…CFYA), 118 to 138 (VILM…NGFL), 155 to 175 (GVAL…VYFL), 181 to 201 (AWLF…MIVG), 207 to 227 (IIIA…ISLW), 228 to 248 (MLAA…LKRY), 341 to 361 (LVVM…GLII), 378 to 398 (YKAA…IVLA), and 410 to 430 (VFFI…YWLF).

It belongs to the WzyE family. In terms of assembly, probably part of a complex composed of WzxE, WzyE and WzzE.

The protein resides in the cell inner membrane. It functions in the pathway bacterial outer membrane biogenesis; enterobacterial common antigen biosynthesis. Its function is as follows. Probably involved in the polymerization of enterobacterial common antigen (ECA) trisaccharide repeat units. This chain is Probable ECA polymerase, found in Escherichia coli O139:H28 (strain E24377A / ETEC).